Reading from the N-terminus, the 260-residue chain is Ribosomal RNA small subunit methyltransferase A (260 aa).

S-adenosyl-L-methionine contacts are provided by L23, G48, E69, D94, and N110.

The protein belongs to the class I-like SAM-binding methyltransferase superfamily. rRNA adenine N(6)-methyltransferase family. RsmA subfamily.

The protein localises to the cytoplasm. The catalysed reaction is adenosine(1518)/adenosine(1519) in 16S rRNA + 4 S-adenosyl-L-methionine = N(6)-dimethyladenosine(1518)/N(6)-dimethyladenosine(1519) in 16S rRNA + 4 S-adenosyl-L-homocysteine + 4 H(+). Its function is as follows. Specifically dimethylates two adjacent adenosines (A1518 and A1519) in the loop of a conserved hairpin near the 3'-end of 16S rRNA in the 30S particle. May play a critical role in biogenesis of 30S subunits. The protein is Ribosomal RNA small subunit methyltransferase A of Thermotoga neapolitana (strain ATCC 49049 / DSM 4359 / NBRC 107923 / NS-E).